The sequence spans 265 residues: 3-deoxy-manno-octulosonate cytidylyltransferase 2 (265 aa).

It belongs to the KdsB family.

The protein localises to the cytoplasm. It catalyses the reaction 3-deoxy-alpha-D-manno-oct-2-ulosonate + CTP = CMP-3-deoxy-beta-D-manno-octulosonate + diphosphate. It functions in the pathway nucleotide-sugar biosynthesis; CMP-3-deoxy-D-manno-octulosonate biosynthesis; CMP-3-deoxy-D-manno-octulosonate from 3-deoxy-D-manno-octulosonate and CTP: step 1/1. The protein operates within bacterial outer membrane biogenesis; lipopolysaccharide biosynthesis. In terms of biological role, activates KDO (a required 8-carbon sugar) for incorporation into bacterial lipopolysaccharide in Gram-negative bacteria. The protein is 3-deoxy-manno-octulosonate cytidylyltransferase 2 of Burkholderia lata (strain ATCC 17760 / DSM 23089 / LMG 22485 / NCIMB 9086 / R18194 / 383).